The sequence spans 248 residues: 2,3-bisphosphoglycerate-dependent phosphoglycerate mutase (248 aa).

Substrate contacts are provided by residues 8–15, 21–22, Arg-60, 87–90, Lys-98, 114–115, and 183–184; these read RHGESQWN, TG, ERHY, RR, and GN. His-9 functions as the Tele-phosphohistidine intermediate in the catalytic mechanism. Glu-87 serves as the catalytic Proton donor/acceptor.

The protein belongs to the phosphoglycerate mutase family. BPG-dependent PGAM subfamily. In terms of assembly, homodimer.

It catalyses the reaction (2R)-2-phosphoglycerate = (2R)-3-phosphoglycerate. It participates in carbohydrate degradation; glycolysis; pyruvate from D-glyceraldehyde 3-phosphate: step 3/5. Its function is as follows. Catalyzes the interconversion of 2-phosphoglycerate and 3-phosphoglycerate. This Alteromonas mediterranea (strain DSM 17117 / CIP 110805 / LMG 28347 / Deep ecotype) protein is 2,3-bisphosphoglycerate-dependent phosphoglycerate mutase.